Consider the following 461-residue polypeptide: Asparagine--tRNA ligase (461 aa).

The protein belongs to the class-II aminoacyl-tRNA synthetase family. As to quaternary structure, homodimer.

The protein localises to the cytoplasm. The catalysed reaction is tRNA(Asn) + L-asparagine + ATP = L-asparaginyl-tRNA(Asn) + AMP + diphosphate + H(+). The sequence is that of Asparagine--tRNA ligase from Oleidesulfovibrio alaskensis (strain ATCC BAA-1058 / DSM 17464 / G20) (Desulfovibrio alaskensis).